The chain runs to 205 residues: Iron-sulfur assembly protein 2 (205 aa).

Cysteine 131, cysteine 196, and cysteine 198 together coordinate Fe cation.

The protein belongs to the HesB/IscA family.

Its subcellular location is the mitochondrion matrix. Involved in the assembly of mitochondrial and cytoplasmic iron-sulfur proteins. Probably involved in the binding of an intermediate of Fe/S cluster assembly. The sequence is that of Iron-sulfur assembly protein 2 (isa2) from Schizosaccharomyces pombe (strain 972 / ATCC 24843) (Fission yeast).